The sequence spans 538 residues: Cytochrome P450 monooxygenase xanG (538 aa).

The chain crosses the membrane as a helical span at residues 44 to 64 (MILYYLASIPLAIICYLAWYL). Asparagine 378 carries an N-linked (GlcNAc...) asparagine glycan. Cysteine 489 lines the heme pocket.

It belongs to the cytochrome P450 family. The cofactor is heme.

The protein localises to the membrane. The protein operates within secondary metabolite biosynthesis. In terms of biological role, cytochrome P450 monooxygenase; part of the gene cluster that mediates the biosynthesis of the isocyanide xanthocillin and its derivatives. The first step of the pathway consists in the conversion of tyrosine into a vinyl-isonitrile intermediate by the isocyanide synthase xanB. Subsequent oxidative dimerization of this intermediate to form xanthocillin may involve the cytochrome P450 monooxygenase xanG, whose expression is coregulated with that of XanB. Xanthocillin can be further modified by the isonitrile hydratase-like protein xanA which introduces N-formyl groups and the methyltransferase xanE which introduces methyl groups, leading to the production of several derivatives including fumiformamide. Finally, fumiformamide can be subject to both oxidative and reductive cyclization to yield melanocins E and F, respectively. The polypeptide is Cytochrome P450 monooxygenase xanG (Aspergillus fumigatus (strain ATCC MYA-4609 / CBS 101355 / FGSC A1100 / Af293) (Neosartorya fumigata)).